Consider the following 323-residue polypeptide: tRNA U34 carboxymethyltransferase (323 aa).

Residues Lys-91, Trp-105, Lys-110, Gly-130, 152 to 154, 181 to 182, Met-196, Tyr-200, and Arg-315 contribute to the carboxy-S-adenosyl-L-methionine site; these read DPT and IE.

It belongs to the class I-like SAM-binding methyltransferase superfamily. CmoB family. In terms of assembly, homotetramer.

The catalysed reaction is carboxy-S-adenosyl-L-methionine + 5-hydroxyuridine(34) in tRNA = 5-carboxymethoxyuridine(34) in tRNA + S-adenosyl-L-homocysteine + H(+). Catalyzes carboxymethyl transfer from carboxy-S-adenosyl-L-methionine (Cx-SAM) to 5-hydroxyuridine (ho5U) to form 5-carboxymethoxyuridine (cmo5U) at position 34 in tRNAs. In Cronobacter sakazakii (strain ATCC BAA-894) (Enterobacter sakazakii), this protein is tRNA U34 carboxymethyltransferase.